The chain runs to 78 residues: uncharacterized protein (78 aa).

Positions 1–22 are cleaved as a signal peptide; the sequence is MFKKSVLFATLLSGVMAFSTNA.

Belongs to the BhsA/McbA family.

It localises to the periplasm. Its function is as follows. Probably involved in reactive chlorine species (RCS) stress resistance. This is an uncharacterized protein from Escherichia coli (strain K12).